The following is an 81-amino-acid chain: Small ribosomal subunit protein eS21 (81 aa).

This sequence belongs to the eukaryotic ribosomal protein eS21 family. Component of the 40S small ribosomal subunit.

It localises to the cytoplasm. The protein localises to the cytosol. Its subcellular location is the rough endoplasmic reticulum. Functionally, component of the small ribosomal subunit. The ribosome is a large ribonucleoprotein complex responsible for the synthesis of proteins in the cell. The chain is Small ribosomal subunit protein eS21 (rps21) from Danio rerio (Zebrafish).